The following is a 306-amino-acid chain: UDP-3-O-acyl-N-acetylglucosamine deacetylase (306 aa).

The Zn(2+) site is built by H81, H241, and D245. H268 acts as the Proton donor in catalysis.

The protein belongs to the LpxC family. Zn(2+) is required as a cofactor.

It carries out the reaction a UDP-3-O-[(3R)-3-hydroxyacyl]-N-acetyl-alpha-D-glucosamine + H2O = a UDP-3-O-[(3R)-3-hydroxyacyl]-alpha-D-glucosamine + acetate. The protein operates within glycolipid biosynthesis; lipid IV(A) biosynthesis; lipid IV(A) from (3R)-3-hydroxytetradecanoyl-[acyl-carrier-protein] and UDP-N-acetyl-alpha-D-glucosamine: step 2/6. Functionally, catalyzes the hydrolysis of UDP-3-O-myristoyl-N-acetylglucosamine to form UDP-3-O-myristoylglucosamine and acetate, the committed step in lipid A biosynthesis. This chain is UDP-3-O-acyl-N-acetylglucosamine deacetylase, found in Hydrogenovibrio crunogenus (strain DSM 25203 / XCL-2) (Thiomicrospira crunogena).